Reading from the N-terminus, the 177-residue chain is Cyclic pyranopterin monophosphate synthase 3 (177 aa).

Residues 79-81 (LCH) and 116-117 (ME) contribute to the substrate site. Residue aspartate 131 is part of the active site. A disordered region spans residues 150–177 (KSGGRSGHYRRHDADVKPSDGGSTEDGC).

The protein belongs to the MoaC family. As to quaternary structure, homohexamer; trimer of dimers.

It carries out the reaction (8S)-3',8-cyclo-7,8-dihydroguanosine 5'-triphosphate = cyclic pyranopterin phosphate + diphosphate. The protein operates within cofactor biosynthesis; molybdopterin biosynthesis. Its function is as follows. Catalyzes the conversion of (8S)-3',8-cyclo-7,8-dihydroguanosine 5'-triphosphate to cyclic pyranopterin monophosphate (cPMP). In Mycobacterium bovis (strain ATCC BAA-935 / AF2122/97), this protein is Cyclic pyranopterin monophosphate synthase 3 (moaC3).